We begin with the raw amino-acid sequence, 367 residues long: Leu/Ile/Val-binding protein (367 aa).

Positions 1–23 (MNIKGKALLAGCIALAFSNMALA) are cleaved as a signal peptide. A disulfide bond links C76 and C101.

Belongs to the leucine-binding protein family.

It localises to the periplasm. This protein is a component of the leucine, isoleucine, valine, (threonine) transport system, which is one of the two periplasmic binding protein-dependent transport systems of the high-affinity transport of the branched-chain amino acids. The sequence is that of Leu/Ile/Val-binding protein (livJ) from Escherichia coli O157:H7.